The primary structure comprises 444 residues: NADH-dependent flavin oxidoreductase nadA (444 aa).

FMN is bound by residues 37-40 and Gln-123; that span reads ERMC. Residues 127 to 149 are disordered; that stretch reads PGRQTPSHRQPEPISASDVPLDT. Substrate is bound at residue 192–195; the sequence is HAAH. Residue 345–346 participates in FMN binding; that stretch reads AR.

It belongs to the NADH:flavin oxidoreductase/NADH oxidase family.

Its subcellular location is the cytoplasm. It localises to the cytosol. Functionally, NADH-dependent flavin oxidoreductase; part of the gene cluster that mediates the biosynthesis of aflatoxins, a group of polyketide-derived furanocoumarins, and part of the most toxic and carcinogenic compounds among the known mycotoxins. The four major aflatoxins produced by A.parasiticus are aflatoxin B1 (AFB1), aflatoxin B2 (AFB2), aflatoxin G1 (AFG1) and aflatoxin G2 (AFG2). Within the aflatoxin pathway, the NADH-dependent flavin oxidoreductase nadA is specifically required for the last steps in which OMST is converted specifically to aflatoxin G1. The biosynthesis of aflatoxins begins with the norsolorinic acid synthase aflC that combines a hexanoyl starter unit produced by the fatty acid synthase aflA/aflB and 7 malonyl-CoA extender units to synthesize the precursor NOR. The second step is the conversion of NOR to averantin and requires the norsolorinic acid ketoreductase aflD, which catalyzes the dehydration of norsolorinic acid to form (1'S)-averantin. The norsolorinic acid reductases aflE and aflF may also play a role in the conversion of NOR to AVN. The cytochrome P450 monooxygenase aflG then catalyzes the hydroxylation of AVN to 5'hydroxyaverantin (HAVN). The next step is performed by the 5'-hydroxyaverantin dehydrogenase aflH that transforms HAVN to 5'-oxoaverantin (OAVN) which is further converted to averufin (AVF) by aflK that plays a dual role in the pathway, as a 5'-oxoaverantin cyclase that mediates conversion of 5'-oxoaverantin, as well as a versicolorin B synthase in a later step in the pathway. The averufin oxidase aflI catalyzes the conversion of AVF to versiconal hemiacetal acetate (VHA). VHA is then the substrate for the versiconal hemiacetal acetate esterase aflJ to yield versiconal (VAL). Versicolorin B synthase aflK then converts VAL to versicolorin B (VERB) by closing the bisfuran ring of aflatoxin which is required for DNA-binding, thus giving to aflatoxin its activity as a mutagen. Then, the activity of the versicolorin B desaturase aflL leads to versicolorin A (VERA). A branch point starts from VERB since it can also be converted to dihydrodemethylsterigmatocystin (DMDHST), probably also by aflL, VERA being a precursor for aflatoxins B1 and G1, and DMDHST for aflatoxins B2 and G2. Next, the versicolorin reductase aflM and the cytochrome P450 monooxygenase aflN are involved in conversion of VERA to demethylsterigmatocystin (DMST). AflX and aflY seem also involved in this step, through probable aflX-mediated epoxide ring-opening step following versicolorin A oxidation and aflY-mediated Baeyer-Villiger oxidation required for the formation of the xanthone ring. The methyltransferase aflO then leads to the modification of DMST to sterigmatocystin (ST), and of DMDHST to dihydrosterigmatocystin (DHST). Both ST and DHST are then substrates of the O-methyltransferase aflP to yield O-methylsterigmatocystin (OMST) and dihydro-O-methylsterigmatocystin (DHOMST), respectively. Finally OMST is converted to aflatoxins B1 and G1, and DHOMST to aflatoxins B2 and G2, via the action of several enzymes including O-methylsterigmatocystin oxidoreductase aflQ, the cytochrome P450 monooxygenase aflU, but also the NADH-dependent flavin oxidoreductase nadA which is specifically required for the synthesis of AFG1. The polypeptide is NADH-dependent flavin oxidoreductase nadA (Aspergillus parasiticus (strain ATCC 56775 / NRRL 5862 / SRRC 143 / SU-1)).